The chain runs to 928 residues: DNA polymerase I (928 aa).

Residues methionine 1–threonine 323 form the 5'-3' exonuclease domain. The region spanning valine 324–glutamine 517 is the 3'-5' exonuclease domain. Positions valine 324–histidine 928 are klenow fragment. Residues glycine 521–histidine 928 form a polymerase region.

The protein belongs to the DNA polymerase type-A family. Single-chain monomer with multiple functions.

It carries out the reaction DNA(n) + a 2'-deoxyribonucleoside 5'-triphosphate = DNA(n+1) + diphosphate. In terms of biological role, in addition to polymerase activity, this DNA polymerase exhibits 3'-5' and 5'-3' exonuclease activity. It is able to utilize nicked circular duplex DNA as a template and can unwind the parental DNA strand from its template. Functionally, genetic interactions among priB, dam, lexA, nagC, polA, rdgB, rdgB, rep and uup link the PriA-PriB replication restart pathway to DNA double-strand break repair. This chain is DNA polymerase I (polA), found in Escherichia coli (strain K12).